Here is a 311-residue protein sequence, read N- to C-terminus: Ribosomal RNA small subunit methyltransferase H (311 aa).

S-adenosyl-L-methionine is bound by residues 32 to 34 (AGH), Asp52, Phe79, Asp100, and Gln107. The disordered stretch occupies residues 287–311 (TASQEELEENNRARSAKLRIAEKRK). A compositionally biased stretch (basic residues) spans 300–311 (RSAKLRIAEKRK).

This sequence belongs to the methyltransferase superfamily. RsmH family.

It is found in the cytoplasm. It carries out the reaction cytidine(1402) in 16S rRNA + S-adenosyl-L-methionine = N(4)-methylcytidine(1402) in 16S rRNA + S-adenosyl-L-homocysteine + H(+). Functionally, specifically methylates the N4 position of cytidine in position 1402 (C1402) of 16S rRNA. This chain is Ribosomal RNA small subunit methyltransferase H, found in Bacillus subtilis (strain 168).